A 263-amino-acid chain; its full sequence is MKPTTISLLQKCKQEKKRFATITAYDYSFAKLFADEGINVMLVGDSLGMTIQGHDSTLPVTVEDIAYHTRAVRRGAPNCLLLSDLPFMAYATPEQACENAAIVMRAGANMVKIEGGAWLVDTVKMLTERAVPVCGHLGLTPQSVNIFGGYKIQGRGDAGQVLLDDALALEAAGAQLLVLECVPVELAKRVTEALSIPVIGIGAGNVTDGQILVMHDAFGITGGHIPKFAKNFLAEAGDMRAAVRQYMAEVESGVYPGEEHSFH.

Mg(2+) contacts are provided by Asp-45 and Asp-84. Residues 45 to 46 (DS), Asp-84, and Lys-112 contribute to the 3-methyl-2-oxobutanoate site. Residue Glu-114 participates in Mg(2+) binding. Glu-180 serves as the catalytic Proton acceptor.

The protein belongs to the PanB family. As to quaternary structure, homodecamer; pentamer of dimers. Requires Mg(2+) as cofactor.

The protein resides in the cytoplasm. It catalyses the reaction 3-methyl-2-oxobutanoate + (6R)-5,10-methylene-5,6,7,8-tetrahydrofolate + H2O = 2-dehydropantoate + (6S)-5,6,7,8-tetrahydrofolate. The protein operates within cofactor biosynthesis; (R)-pantothenate biosynthesis; (R)-pantoate from 3-methyl-2-oxobutanoate: step 1/2. Its function is as follows. Catalyzes the reversible reaction in which hydroxymethyl group from 5,10-methylenetetrahydrofolate is transferred onto alpha-ketoisovalerate to form ketopantoate. The sequence is that of 3-methyl-2-oxobutanoate hydroxymethyltransferase from Salmonella paratyphi C (strain RKS4594).